The sequence spans 593 residues: Aspartate--tRNA ligase (593 aa).

Glutamate 180 contributes to the L-aspartate binding site. The segment at 204–207 (QIFK) is aspartate. Residue arginine 226 participates in L-aspartate binding. Residues 226–228 (RDE) and glutamine 235 each bind ATP. Residue histidine 453 coordinates L-aspartate. Glutamate 487 is an ATP binding site. Arginine 494 serves as a coordination point for L-aspartate. 539–542 (GLDR) contributes to the ATP binding site.

It belongs to the class-II aminoacyl-tRNA synthetase family. Type 1 subfamily. In terms of assembly, homodimer.

The protein localises to the cytoplasm. It carries out the reaction tRNA(Asp) + L-aspartate + ATP = L-aspartyl-tRNA(Asp) + AMP + diphosphate. Catalyzes the attachment of L-aspartate to tRNA(Asp) in a two-step reaction: L-aspartate is first activated by ATP to form Asp-AMP and then transferred to the acceptor end of tRNA(Asp). The protein is Aspartate--tRNA ligase of Clostridium botulinum (strain ATCC 19397 / Type A).